The chain runs to 264 residues: tRNA (guanine-N(7)-)-methyltransferase (264 aa).

Residues 1–39 (MIHDDDPNAPGAPHDDATAAPASATRAAPAAGDDDDANP) are disordered. The segment covering 18–31 (TAAPASATRAAPAA) has biased composition (low complexity). E94, E119, D146, and D169 together coordinate S-adenosyl-L-methionine. The active site involves D169. Substrate contacts are provided by residues K173, D205, and 240-243 (TKFE).

The protein belongs to the class I-like SAM-binding methyltransferase superfamily. TrmB family.

The enzyme catalyses guanosine(46) in tRNA + S-adenosyl-L-methionine = N(7)-methylguanosine(46) in tRNA + S-adenosyl-L-homocysteine. Its pathway is tRNA modification; N(7)-methylguanine-tRNA biosynthesis. In terms of biological role, catalyzes the formation of N(7)-methylguanine at position 46 (m7G46) in tRNA. The polypeptide is tRNA (guanine-N(7)-)-methyltransferase (Burkholderia mallei (strain ATCC 23344)).